The sequence spans 724 residues: NAD(+) hydrolase SARM1 (724 aa).

The N-terminal 27 residues, 1 to 27, are a transit peptide targeting the mitochondrion; the sequence is MVLTLLFSAYKLCRFFTMSGPRPGADR. The segment at 24–56 is disordered; it reads GADRLTVPGPDRSGGASPWWAAGGRGSREVSPG. Positions 36-45 are enriched in low complexity; that stretch reads SGGASPWWAA. The ARM 1 repeat unit spans residues 60–100; sequence EVQGALERSLPELQQALSELKQASAARAVGAGLAEVFQLVE. NAD(+) is bound by residues tryptophan 103, arginine 110, 149–157, and 190–193; these read EQILVAENR and HMFK. 7 ARM repeats span residues 114 to 153, 155 to 193, 196 to 235, 237 to 280, 281 to 314, 315 to 354, and 359 to 402; these read QGLCDAIRLDGGLDLLLRLLQAPELETRVQAARLLEQILV, ENRDRVARIGLGVILNLAKEREPVELARSVAGILEHMFK, EETCQRLVAAGGLDAVLYWCRRTDPALLRHCALALANCAL, GGQT…LATN, KEVEREVEHSGTLALVEPLVASLDPGRFARCLVD, ASDTSQGRGPDDLQSLVLLLDSSRLEAQCIGAFYLCAEAA, and QGKT…EEVP. SAM domains follow at residues 412-476 and 486-548; these read WKEA…LKTF and NLAD…MLHS. Phosphoserine is present on residues serine 548 and serine 558. In terms of domain architecture, TIR spans 560 to 703; sequence DTPDVFISYR…KIIRFLQGRP (144 aa). NAD(+) is bound by residues 569–570 and glutamate 599; that span reads RR. The active site involves glutamate 642. Residues 703-716 are compositionally biased toward polar residues; that stretch reads PSQDSSAGSDTSLE. Positions 703-724 are disordered; it reads PSQDSSAGSDTSLEGATPMGLP.

This sequence belongs to the SARM1 family. As to quaternary structure, homooctamer; forms an octameric ring via SAM domains. Interacts with TICAM1/TRIF and thereby interferes with TICAM1/TRIF function. Interacts with SDC2 (via cytoplasmic domain) and MAPK10/JNK3. Phosphorylation at Ser-548 by JNK kinases (MAPK8, MAPK9 and /or MAPK10) enhance the NAD(+) hydrolase (NADase) activity. Phosphorylation at Ser-548 and subsequent activation takes place in response to oxidative stress conditions and inhibits mitochondrial respiration. As to expression, widely expressed in the brain and neurons (at protein level). Expressed in photoreceptor cells of the neural retina.

The protein resides in the cytoplasm. It is found in the cell projection. The protein localises to the axon. It localises to the dendrite. Its subcellular location is the synapse. The protein resides in the mitochondrion. The catalysed reaction is NAD(+) + H2O = ADP-D-ribose + nicotinamide + H(+). The enzyme catalyses NAD(+) = cyclic ADP-beta-D-ribose + nicotinamide + H(+). It catalyses the reaction NADP(+) + H2O = ADP-D-ribose 2'-phosphate + nicotinamide + H(+). With respect to regulation, autoinhibited: in the inactive state, the enzymatic TIR domain is held apart by the autoinhibiting ARM repeats. NAD(+)-binding to ARM repeats maintains an inactive state by promoting interaction between ARM repeats and the TIR domain, thereby facilitating inhibition of the enzymatic TIR domain. Following activation, possibly by nicotinamide mononucleotide (NMN), auto-inhibitory interactions are released, allowing self-association of the TIR domains and subsequent activation of the NAD(+) hydrolase (NADase) activity. Self-association of TIR domains is facilitated by the octamer of SAM domains. Its function is as follows. NAD(+) hydrolase, which plays a key role in axonal degeneration following injury by regulating NAD(+) metabolism. Acts as a negative regulator of MYD88- and TRIF-dependent toll-like receptor signaling pathway by promoting Wallerian degeneration, an injury-induced form of programmed subcellular death which involves degeneration of an axon distal to the injury site. Wallerian degeneration is triggered by NAD(+) depletion: in response to injury, SARM1 is activated and catalyzes cleavage of NAD(+) into ADP-D-ribose (ADPR), cyclic ADPR (cADPR) and nicotinamide; NAD(+) cleavage promoting cytoskeletal degradation and axon destruction. Also able to hydrolyze NADP(+), but not other NAD(+)-related molecules. Can activate neuronal cell death in response to stress. Regulates dendritic arborization through the MAPK4-JNK pathway. Involved in innate immune response: inhibits both TICAM1/TRIF- and MYD88-dependent activation of JUN/AP-1, TRIF-dependent activation of NF-kappa-B and IRF3, and the phosphorylation of MAPK14/p38. In Mus musculus (Mouse), this protein is NAD(+) hydrolase SARM1.